Consider the following 433-residue polypeptide: PBSX phage terminase large subunit (433 aa).

This sequence to B.subtilis YqaT and phage SPP1 terminase large subunit. In terms of assembly, dimer of a small and a large subunit.

Its function is as follows. Functions as a terminase. The protein is PBSX phage terminase large subunit (xtmB) of Bacillus subtilis (strain 168).